The sequence spans 303 residues: Enoyl-CoA hydratase domain-containing protein 3, mitochondrial (303 aa).

The transit peptide at 1 to 17 (MAAVAVLRAFGASGPMC) directs the protein to the mitochondrion. Residue Lys110 is modified to N6-succinyllysine.

It belongs to the enoyl-CoA hydratase/isomerase family. Expressed in adipocytes. Expressed in blood cells, with higher expression in patients with low coronary lesions.

It localises to the mitochondrion. Its function is as follows. May play a role in fatty acid biosynthesis and insulin sensitivity. In Homo sapiens (Human), this protein is Enoyl-CoA hydratase domain-containing protein 3, mitochondrial.